Reading from the N-terminus, the 82-residue chain is Penaeidin-3a (82 aa).

The signal sequence occupies residues 1–19 (MRLVVCLVFLASFALVCQG). Residue glutamine 20 is modified to Pyrrolidone carboxylic acid. 3 disulfide bridges follow: cysteine 51–cysteine 66, cysteine 55–cysteine 73, and cysteine 67–cysteine 74. Position 81 is a serine amide (serine 81).

In terms of processing, the N-terminus forms pyrrolidone carboxylic acid. In terms of tissue distribution, higher expression in hemocytes and to a lesser extent in heart, testis, gills, intestine, lymphoid organ and hepatopancreas. Traces in eyes and subcuticular epithelium. Not present in the brain.

It localises to the cytoplasmic granule. Its function is as follows. Antibacterial activity against M.luteus and E.coli bacteria. Antifungal activity against N.crassa and F.oxysporum. Presents chitin-binding activity. The chain is Penaeidin-3a from Penaeus vannamei (Whiteleg shrimp).